Consider the following 231-residue polypeptide: Large ribosomal subunit protein uL1 (231 aa).

The protein belongs to the universal ribosomal protein uL1 family. In terms of assembly, part of the 50S ribosomal subunit.

Functionally, binds directly to 23S rRNA. The L1 stalk is quite mobile in the ribosome, and is involved in E site tRNA release. In terms of biological role, protein L1 is also a translational repressor protein, it controls the translation of the L11 operon by binding to its mRNA. The chain is Large ribosomal subunit protein uL1 from Hydrogenovibrio crunogenus (strain DSM 25203 / XCL-2) (Thiomicrospira crunogena).